A 510-amino-acid chain; its full sequence is Probable gamma-aminobutyrate transaminase 3, mitochondrial (510 aa).

The transit peptide at 1 to 41 (MICRSLLLLRSNAASKASSIVKHVAATGCLPEYSSEAPARY) directs the protein to the mitochondrion. Pyridoxal 5'-phosphate is bound at residue 166 to 167 (GS). Tyrosine 199 serves as a coordination point for substrate. Residue aspartate 306 participates in pyridoxal 5'-phosphate binding. Residue lysine 335 coordinates substrate. Lysine 335 carries the post-translational modification N6-(pyridoxal phosphate)lysine.

Belongs to the class-III pyridoxal-phosphate-dependent aminotransferase family.

The protein localises to the mitochondrion. The catalysed reaction is 4-aminobutanoate + pyruvate = succinate semialdehyde + L-alanine. The enzyme catalyses 4-aminobutanoate + glyoxylate = succinate semialdehyde + glycine. Its function is as follows. Transaminase that degrades gamma-amino butyric acid (GABA). The chain is Probable gamma-aminobutyrate transaminase 3, mitochondrial from Oryza sativa subsp. indica (Rice).